The chain runs to 29 residues: U-limacoditoxin(12)-Dv72 (29 aa).

The signal sequence occupies residues 1-15 (MNFGMLKLLTVLIIC). Asparagine amide is present on N27.

Belongs to the limacoditoxin-12 family. As to expression, expressed by the venom secretory cell of the spine. The spine is a cuticular structure containing a single large nucleated venom-secreting cell at its base. It is an independent unit capable of producing, storing and injecting venom. On the back of D.vulnerans caterpillars, spines are grouped together by 50 to 100 to form scoli, of which there are eight in D.vulnerans.

The protein resides in the secreted. Its function is as follows. Probable toxin. Does not show insecticidal, antimicrobial and antiparasitic activities. Does not induce increase in intracellular calcium in mouse DRG neurons, suggesting that it does not induce pain. The protein is U-limacoditoxin(12)-Dv72 of Doratifera vulnerans (Mottled cup moth).